Consider the following 928-residue polypeptide: DNA mismatch repair protein MutS (928 aa).

613–620 (GPNMAGKS) is a binding site for ATP. Residues 854 to 872 (KAKSNKDDHRIDEKTENSS) show a composition bias toward basic and acidic residues. Positions 854–880 (KAKSNKDDHRIDEKTENSSKKHKNKDS) are disordered.

This sequence belongs to the DNA mismatch repair MutS family.

Its function is as follows. This protein is involved in the repair of mismatches in DNA. It is possible that it carries out the mismatch recognition step. This protein has a weak ATPase activity. In Clostridium beijerinckii (strain ATCC 51743 / NCIMB 8052) (Clostridium acetobutylicum), this protein is DNA mismatch repair protein MutS.